The following is a 368-amino-acid chain: UDP-N-acetylglucosamine--N-acetylmuramyl-(pentapeptide) pyrophosphoryl-undecaprenol N-acetylglucosamine transferase (368 aa).

Residues 16–18 (TGG), asparagine 130, arginine 171, serine 197, and glutamine 296 each bind UDP-N-acetyl-alpha-D-glucosamine.

It belongs to the glycosyltransferase 28 family. MurG subfamily.

Its subcellular location is the cell inner membrane. It carries out the reaction di-trans,octa-cis-undecaprenyl diphospho-N-acetyl-alpha-D-muramoyl-L-alanyl-D-glutamyl-meso-2,6-diaminopimeloyl-D-alanyl-D-alanine + UDP-N-acetyl-alpha-D-glucosamine = di-trans,octa-cis-undecaprenyl diphospho-[N-acetyl-alpha-D-glucosaminyl-(1-&gt;4)]-N-acetyl-alpha-D-muramoyl-L-alanyl-D-glutamyl-meso-2,6-diaminopimeloyl-D-alanyl-D-alanine + UDP + H(+). It participates in cell wall biogenesis; peptidoglycan biosynthesis. Functionally, cell wall formation. Catalyzes the transfer of a GlcNAc subunit on undecaprenyl-pyrophosphoryl-MurNAc-pentapeptide (lipid intermediate I) to form undecaprenyl-pyrophosphoryl-MurNAc-(pentapeptide)GlcNAc (lipid intermediate II). This Acidiphilium cryptum (strain JF-5) protein is UDP-N-acetylglucosamine--N-acetylmuramyl-(pentapeptide) pyrophosphoryl-undecaprenol N-acetylglucosamine transferase.